The chain runs to 119 residues: Circadian clock oscillator protein KaiB (119 aa).

The protein belongs to the KaiB family. In terms of assembly, may undergo a major conformational rearrangment; in the free state forms homooligomers. When bound to KaiC switches to a monomeric thioredoxin-fold (KaiB(fs)). The active oscillator complex is probably KaiC(6):KaiB(6).

In terms of biological role, component of the KaiBC clock protein complex, which constitutes the main circadian regulator in cyanobacteria; it may modify the ATPase activity of KaiC. Functionally, may be a metamorphic protein which reversibly switches between an inactive tetrameric fold and a rare, thioredoxin-like monomeric fold (KaiB(fs)). KaiB(fs) binds phospho-KaiC, and perhaps clock output effectors. The chain is Circadian clock oscillator protein KaiB from Prochlorococcus marinus (strain MIT 9313).